We begin with the raw amino-acid sequence, 392 residues long: MALQPAAGARDLNPQQVELNQKLSQRLAEVYRLWGYDEVSPPRVERLETLKAGGAIASQDIVRLVADEPLGLRPEMTASIARAACTRLRQRPRPLRLWAAGTIFESRTADEGSLCIEENLQSGVELFGVEPINAEMELLSLLFSAVETLELSKQHQPRLLVGHTALMDLIMLPFQNDLREKIRTALIHYDRLALENLQLPNDQFERLLHHLECRGEPLDVLERLSGLFGTQQALNNLQRLFEQMGPLAADQGIDLQLDPTFQPHFELYTGLVFQLVCQSDAAPVVIARGGRYDNLVARCGAKGLQAAGVGFSFAIDDIRELLTKEIKASEAVESTLVAYGDQATLEHALKRQRHWHKQGQRAVVELEACHDREEAFSRLADRGCSTLDWLDH.

This sequence belongs to the class-II aminoacyl-tRNA synthetase family. HisZ subfamily. As to quaternary structure, heteromultimer composed of HisG and HisZ subunits.

It localises to the cytoplasm. It participates in amino-acid biosynthesis; L-histidine biosynthesis; L-histidine from 5-phospho-alpha-D-ribose 1-diphosphate: step 1/9. Functionally, required for the first step of histidine biosynthesis. May allow the feedback regulation of ATP phosphoribosyltransferase activity by histidine. This is ATP phosphoribosyltransferase regulatory subunit from Prochlorococcus marinus (strain MIT 9303).